Reading from the N-terminus, the 462-residue chain is A-type ATP synthase subunit B (462 aa).

This sequence belongs to the ATPase alpha/beta chains family. In terms of assembly, has multiple subunits with at least A(3), B(3), C, D, E, F, H, I and proteolipid K(x).

The protein localises to the cell membrane. Component of the A-type ATP synthase that produces ATP from ADP in the presence of a proton gradient across the membrane. The B chain is a regulatory subunit. The sequence is that of A-type ATP synthase subunit B from Pyrococcus abyssi (strain GE5 / Orsay).